The chain runs to 500 residues: Cytochrome P450 71B34 (500 aa).

Residues 1–21 form a helical membrane-spanning segment; that stretch reads MTNIWLLSLIFVICILVAVFN. C440 is a binding site for heme.

Belongs to the cytochrome P450 family. The cofactor is heme.

It is found in the membrane. This is Cytochrome P450 71B34 (CYP71B34) from Arabidopsis thaliana (Mouse-ear cress).